Consider the following 268-residue polypeptide: Trypsin-like protease (268 aa).

The first 41 residues, 1 to 41 (MTHTTTIAAKRGGLALAKKAAAAGAVALAVASLQPVSAAHA), serve as a signal peptide directing secretion. Positions 42–45 (ADAR) are cleaved as a propeptide — activation peptide. The 221-residue stretch at 46–266 (VIGGKPAAQN…FAKDIAKAAS (221 aa)) folds into the Peptidase S1 domain. The cysteines at positions 67 and 83 are disulfide-linked. Active-site charge relay system residues include H82 and D127. Cystine bridges form between C187–C202 and C213–C242. Catalysis depends on S217, which acts as the Charge relay system.

Belongs to the peptidase S1 family.

In terms of biological role, protease that shows preferential cleavage after Arg and Lys residues. This is Trypsin-like protease from Streptomyces glaucescens.